The primary structure comprises 426 residues: 26S proteasome regulatory subunit 7 (426 aa).

209–216 contacts ATP; the sequence is GPPGTGKT.

The protein belongs to the AAA ATPase family.

The protein localises to the cytoplasm. It localises to the nucleus. In terms of biological role, the 26S proteasome is involved in the ATP-dependent degradation of ubiquitinated proteins. The regulatory (or ATPase) complex confers ATP dependency and substrate specificity to the 26S complex. The sequence is that of 26S proteasome regulatory subunit 7 (RPT1) from Spinacia oleracea (Spinach).